Consider the following 322-residue polypeptide: MSAVPHDSPAHPPVVCLLGPTASGKTAAALALAADAPVEIISLDSALVYREMDIGTAKPTREELAVAPHHLIDIIDPADSYSAAQFVADAERLIGEIHARGHVPLIVGGTMLYYKALTQGLNDLPQADAALRAELDQLAAERGWPALHAMLAEVDPVTAARLAPNDAQRIQRALEIHRLSGQPMSALLARQAEGRTFAGAADQRYRVIALEPSDRLALHHRIARRYDAMLAQGFIDEVERLRARGDLHPGLPSIRCVGYRQVWEYLDGEADFATMRERGIAATRQLCKRQLTWLRSTPERRVVDCLATDYVDQVRRLADFGH.

19–26 contacts ATP; the sequence is GPTASGKT. Residue 21-26 participates in substrate binding; that stretch reads TASGKT. 3 interaction with substrate tRNA regions span residues 44–47, 168–172, and 255–260; these read DSAL, QRIQR, and RCVGYR.

Belongs to the IPP transferase family. Monomer. Requires Mg(2+) as cofactor.

The catalysed reaction is adenosine(37) in tRNA + dimethylallyl diphosphate = N(6)-dimethylallyladenosine(37) in tRNA + diphosphate. Its function is as follows. Catalyzes the transfer of a dimethylallyl group onto the adenine at position 37 in tRNAs that read codons beginning with uridine, leading to the formation of N6-(dimethylallyl)adenosine (i(6)A). The protein is tRNA dimethylallyltransferase of Cupriavidus taiwanensis (strain DSM 17343 / BCRC 17206 / CCUG 44338 / CIP 107171 / LMG 19424 / R1) (Ralstonia taiwanensis (strain LMG 19424)).